The primary structure comprises 85 residues: Toxin CsE8 (85 aa).

The N-terminal stretch at Met-1–Ser-19 is a signal peptide. Residues Glu-20–Gly-83 form the LCN-type CS-alpha/beta domain. Disulfide bonds link Cys-31-Cys-82, Cys-35-Cys-58, Cys-44-Cys-63, and Cys-48-Cys-65. Cys-82 bears the Cysteine amide mark.

The protein belongs to the long (4 C-C) scorpion toxin superfamily. Sodium channel inhibitor family. Beta subfamily. As to expression, expressed by the venom gland.

Its subcellular location is the secreted. Its function is as follows. Beta toxins bind voltage-independently at site-4 of sodium channels (Nav) and shift the voltage of activation toward more negative potentials thereby affecting sodium channel activation and promoting spontaneous and repetitive firing. The protein is Toxin CsE8 of Centruroides sculpturatus (Arizona bark scorpion).